Here is a 374-residue protein sequence, read N- to C-terminus: Occlusion-derived virus envelope protein E56 (374 aa).

A helical transmembrane segment spans residues 155–175 (AGVGVLLAGGAYLTFSAATLV). N-linked (GlcNAc...) asparagine; by host glycosylation is present at N183. A helical transmembrane segment spans residues 319-339 (LMPLIWLIGAVLFLALVVYLI). Residues 355–374 (PPVVIVPPPATTNLNPQQQI) are disordered.

This sequence belongs to the baculoviridae E56 family.

It localises to the virion membrane. Structural protein that is specific for occlusion-derived virus (ODV) envelopes but not of budded virus (BV). This Orgyia pseudotsugata (Douglas-fir tussock moth) protein is Occlusion-derived virus envelope protein E56 (ODVP6E).